We begin with the raw amino-acid sequence, 155 residues long: 6,7-dimethyl-8-ribityllumazine synthase (155 aa).

5-amino-6-(D-ribitylamino)uracil is bound by residues Phe23, 57-59 (AFE), and 81-83 (AVI). 86–87 (ST) lines the (2S)-2-hydroxy-3-oxobutyl phosphate pocket. His89 functions as the Proton donor in the catalytic mechanism. Phe114 contacts 5-amino-6-(D-ribitylamino)uracil. (2S)-2-hydroxy-3-oxobutyl phosphate is bound at residue Arg128.

This sequence belongs to the DMRL synthase family.

It carries out the reaction (2S)-2-hydroxy-3-oxobutyl phosphate + 5-amino-6-(D-ribitylamino)uracil = 6,7-dimethyl-8-(1-D-ribityl)lumazine + phosphate + 2 H2O + H(+). It participates in cofactor biosynthesis; riboflavin biosynthesis; riboflavin from 2-hydroxy-3-oxobutyl phosphate and 5-amino-6-(D-ribitylamino)uracil: step 1/2. Catalyzes the formation of 6,7-dimethyl-8-ribityllumazine by condensation of 5-amino-6-(D-ribitylamino)uracil with 3,4-dihydroxy-2-butanone 4-phosphate. This is the penultimate step in the biosynthesis of riboflavin. This is 6,7-dimethyl-8-ribityllumazine synthase from Pelobacter propionicus (strain DSM 2379 / NBRC 103807 / OttBd1).